Consider the following 361-residue polypeptide: Large ribosomal subunit protein mL45 (361 aa).

Positions 319–361 (EPPKELSAGDAEVKQVDSVGEQSKEQLPLATPVESHTKPSLAI) are disordered.

Belongs to the mitochondrion-specific ribosomal protein mL45 family.

It localises to the mitochondrion. This Drosophila melanogaster (Fruit fly) protein is Large ribosomal subunit protein mL45 (mRpL45).